The sequence spans 245 residues: Probable transcriptional regulatory protein CPR_1922 (245 aa).

The protein belongs to the TACO1 family.

It localises to the cytoplasm. This is Probable transcriptional regulatory protein CPR_1922 from Clostridium perfringens (strain SM101 / Type A).